Consider the following 94-residue polypeptide: Large ribosomal subunit protein bL25 (94 aa).

This sequence belongs to the bacterial ribosomal protein bL25 family. As to quaternary structure, part of the 50S ribosomal subunit; part of the 5S rRNA/L5/L18/L25 subcomplex. Contacts the 5S rRNA. Binds to the 5S rRNA independently of L5 and L18.

Its function is as follows. This is one of the proteins that binds to the 5S RNA in the ribosome where it forms part of the central protuberance. In Cronobacter sakazakii (strain ATCC BAA-894) (Enterobacter sakazakii), this protein is Large ribosomal subunit protein bL25.